Consider the following 324-residue polypeptide: Phospho-N-acetylmuramoyl-pentapeptide-transferase (324 aa).

Helical transmembrane passes span 9–29 (TFAV…PFLV), 53–73 (TMGA…FSFI), 77–97 (VSAA…LGFL), 117–137 (FLGQ…SDFA), 149–169 (IDLG…FSNA), 176–196 (LDGL…VIAF), 201–221 (MDVA…LLFN), 227–247 (IFMG…VSIL), 253–273 (LLLL…LQVF), and 304–324 (VLTF…VVIF).

Belongs to the glycosyltransferase 4 family. MraY subfamily. Requires Mg(2+) as cofactor.

It is found in the cell membrane. The catalysed reaction is UDP-N-acetyl-alpha-D-muramoyl-L-alanyl-gamma-D-glutamyl-meso-2,6-diaminopimeloyl-D-alanyl-D-alanine + di-trans,octa-cis-undecaprenyl phosphate = di-trans,octa-cis-undecaprenyl diphospho-N-acetyl-alpha-D-muramoyl-L-alanyl-D-glutamyl-meso-2,6-diaminopimeloyl-D-alanyl-D-alanine + UMP. It functions in the pathway cell wall biogenesis; peptidoglycan biosynthesis. Functionally, catalyzes the initial step of the lipid cycle reactions in the biosynthesis of the cell wall peptidoglycan: transfers peptidoglycan precursor phospho-MurNAc-pentapeptide from UDP-MurNAc-pentapeptide onto the lipid carrier undecaprenyl phosphate, yielding undecaprenyl-pyrophosphoryl-MurNAc-pentapeptide, known as lipid I. This is Phospho-N-acetylmuramoyl-pentapeptide-transferase from Listeria innocua serovar 6a (strain ATCC BAA-680 / CLIP 11262).